We begin with the raw amino-acid sequence, 160 residues long: 6,7-dimethyl-8-ribityllumazine synthase (160 aa).

5-amino-6-(D-ribitylamino)uracil is bound by residues Phe22, 57 to 59 (AVE), and 81 to 83 (AVI). 86-87 (GT) is a binding site for (2S)-2-hydroxy-3-oxobutyl phosphate. The active-site Proton donor is the His89. Residue Phe114 participates in 5-amino-6-(D-ribitylamino)uracil binding. Arg128 lines the (2S)-2-hydroxy-3-oxobutyl phosphate pocket.

Belongs to the DMRL synthase family. Forms an icosahedral capsid composed of 60 subunits, arranged as a dodecamer of pentamers.

It catalyses the reaction (2S)-2-hydroxy-3-oxobutyl phosphate + 5-amino-6-(D-ribitylamino)uracil = 6,7-dimethyl-8-(1-D-ribityl)lumazine + phosphate + 2 H2O + H(+). The protein operates within cofactor biosynthesis; riboflavin biosynthesis; riboflavin from 2-hydroxy-3-oxobutyl phosphate and 5-amino-6-(D-ribitylamino)uracil: step 1/2. Catalyzes the formation of 6,7-dimethyl-8-ribityllumazine by condensation of 5-amino-6-(D-ribitylamino)uracil with 3,4-dihydroxy-2-butanone 4-phosphate. This is the penultimate step in the biosynthesis of riboflavin. The polypeptide is 6,7-dimethyl-8-ribityllumazine synthase (Shewanella sediminis (strain HAW-EB3)).